A 424-amino-acid chain; its full sequence is Adenylosuccinate synthetase (424 aa).

GTP-binding positions include 11–17 (GDEGKGK) and 39–41 (GHT). Asp-12 (proton acceptor) is an active-site residue. Mg(2+) contacts are provided by Asp-12 and Gly-39. IMP contacts are provided by residues 12 to 15 (DEGK), 37 to 40 (NAGH), Thr-127, Arg-141, Gln-223, Thr-238, and Arg-302. His-40 functions as the Proton donor in the catalytic mechanism. 298–304 (TTTGRGR) lines the substrate pocket. GTP contacts are provided by residues Arg-304, 330–332 (KLD), and 412–414 (SVG).

This sequence belongs to the adenylosuccinate synthetase family. As to quaternary structure, homodimer. The cofactor is Mg(2+).

Its subcellular location is the cytoplasm. It carries out the reaction IMP + L-aspartate + GTP = N(6)-(1,2-dicarboxyethyl)-AMP + GDP + phosphate + 2 H(+). It functions in the pathway purine metabolism; AMP biosynthesis via de novo pathway; AMP from IMP: step 1/2. Plays an important role in the de novo pathway of purine nucleotide biosynthesis. Catalyzes the first committed step in the biosynthesis of AMP from IMP. The chain is Adenylosuccinate synthetase from Methanosarcina barkeri (strain Fusaro / DSM 804).